The primary structure comprises 170 residues: Vimentin A1 (170 aa).

The span at 1–10 (DLTEAANKSN) shows a compositional bias: polar residues. The interval 1–20 (DLTEAANKSNEALRLAKQES) is disordered. The tract at residues 1 to 111 (DLTEAANKSN…ATYRKLLEGE (111 aa)) is coil 2. The 115-residue stretch at 1 to 115 (DLTEAANKSN…KLLEGEESRI (115 aa)) folds into the IF rod domain. Positions 112-170 (ESRISTPLPNFSSFNLRETMLELKPNIESTFTKKVLIKTIETRDGQVLNESTQNHDDLE) are tail.

This sequence belongs to the intermediate filament family. Homomer. In terms of processing, one of the most prominent phosphoproteins in various cells of mesenchymal origin. Phosphorylation is enhanced during cell division, at which time vimentin filaments are significantly reorganized. As to expression, expressed in low amounts in retina, optic nerve, and brain and in higher amounts in spinal cord.

In terms of biological role, vimentins are class-III intermediate filaments found in various non-epithelial cells, especially mesenchymal cells. Vimentin is attached to the nucleus, endoplasmic reticulum, and mitochondria, either laterally or terminally. This chain is Vimentin A1, found in Carassius auratus (Goldfish).